Consider the following 236-residue polypeptide: 2,3,4,5-tetrahydropyridine-2,6-dicarboxylate N-acetyltransferase (236 aa).

This sequence belongs to the transferase hexapeptide repeat family. DapH subfamily.

It carries out the reaction (S)-2,3,4,5-tetrahydrodipicolinate + acetyl-CoA + H2O = L-2-acetamido-6-oxoheptanedioate + CoA. It participates in amino-acid biosynthesis; L-lysine biosynthesis via DAP pathway; LL-2,6-diaminopimelate from (S)-tetrahydrodipicolinate (acetylase route): step 1/3. Catalyzes the transfer of an acetyl group from acetyl-CoA to tetrahydrodipicolinate. In Lactiplantibacillus plantarum (strain ATCC BAA-793 / NCIMB 8826 / WCFS1) (Lactobacillus plantarum), this protein is 2,3,4,5-tetrahydropyridine-2,6-dicarboxylate N-acetyltransferase.